Here is a 525-residue protein sequence, read N- to C-terminus: GMP synthase [glutamine-hydrolyzing] (525 aa).

The 199-residue stretch at R9–L207 folds into the Glutamine amidotransferase type-1 domain. The active-site Nucleophile is C86. Active-site residues include H181 and E183. The 193-residue stretch at W208–R400 folds into the GMPS ATP-PPase domain. Position 235-241 (S235–S241) interacts with ATP.

As to quaternary structure, homodimer.

The catalysed reaction is XMP + L-glutamine + ATP + H2O = GMP + L-glutamate + AMP + diphosphate + 2 H(+). It participates in purine metabolism; GMP biosynthesis; GMP from XMP (L-Gln route): step 1/1. In terms of biological role, catalyzes the synthesis of GMP from XMP. The polypeptide is GMP synthase [glutamine-hydrolyzing] (Escherichia fergusonii (strain ATCC 35469 / DSM 13698 / CCUG 18766 / IAM 14443 / JCM 21226 / LMG 7866 / NBRC 102419 / NCTC 12128 / CDC 0568-73)).